The following is a 207-amino-acid chain: Outer-membrane lipoprotein LolB (207 aa).

The first 21 residues, 1–21 (MPMRKRHFYRLLPLASLLLAA), serve as a signal peptide directing secretion. Cys22 carries N-palmitoyl cysteine lipidation. Residue Cys22 is the site of S-diacylglycerol cysteine attachment.

The protein belongs to the LolB family. Monomer.

The protein resides in the cell outer membrane. In terms of biological role, plays a critical role in the incorporation of lipoproteins in the outer membrane after they are released by the LolA protein. This is Outer-membrane lipoprotein LolB from Yersinia pseudotuberculosis serotype O:1b (strain IP 31758).